The following is a 164-amino-acid chain: Peptidyl-prolyl cis-trans isomerase A-like 4C (164 aa).

Positions F7–Q163 constitute a PPIase cyclophilin-type domain.

This sequence belongs to the cyclophilin-type PPIase family. PPIase A subfamily.

The protein localises to the cytoplasm. It carries out the reaction [protein]-peptidylproline (omega=180) = [protein]-peptidylproline (omega=0). PPIases accelerate the folding of proteins. It catalyzes the cis-trans isomerization of proline imidic peptide bonds in oligopeptides. The chain is Peptidyl-prolyl cis-trans isomerase A-like 4C from Homo sapiens (Human).